The following is a 99-amino-acid chain: EPIDERMAL PATTERNING FACTOR-like protein 8 (99 aa).

Residues 1 to 35 form the signal peptide; sequence MDSSRKYKRCGFGAALFVANIFFSLLSLHCISGAH. 3 cysteine pairs are disulfide-bonded: cysteine 53-cysteine 90, cysteine 57-cysteine 63, and cysteine 60-cysteine 92.

This sequence belongs to the plant cysteine rich small secretory peptide family. Epidermal patterning factor subfamily.

It localises to the secreted. In terms of biological role, controls stomatal patterning. The polypeptide is EPIDERMAL PATTERNING FACTOR-like protein 8 (Arabidopsis thaliana (Mouse-ear cress)).